Consider the following 241-residue polypeptide: ATP synthase subunit a (241 aa).

The next 5 membrane-spanning stretches (helical) occupy residues glycine 30–glycine 50, phenylalanine 91–tryptophan 111, isoleucine 128–serine 148, leucine 193–leucine 213, and glycine 214–glycine 234.

Belongs to the ATPase A chain family. F-type ATPases have 2 components, CF(1) - the catalytic core - and CF(0) - the membrane proton channel. CF(1) has five subunits: alpha(3), beta(3), gamma(1), delta(1), epsilon(1). CF(0) has four main subunits: a, b, b' and c.

The protein localises to the cellular thylakoid membrane. Functionally, key component of the proton channel; it plays a direct role in the translocation of protons across the membrane. The polypeptide is ATP synthase subunit a (Prochlorococcus marinus (strain NATL1A)).